Here is a 434-residue protein sequence, read N- to C-terminus: Zinc carboxypeptidase (434 aa).

A signal peptide spans 1 to 33 (MSPKRRRLMAAALGACVALVLPLHAGSAQPSTA). The propeptide at 34–114 (KTPERTVFEV…DFTDPQVGTQ (81 aa)) is activation peptide. The region spanning 122–423 (GYHNFQETVT…SAVELFLSYS (302 aa)) is the Peptidase M14 domain. Histidine 183 and glutamate 186 together coordinate Zn(2+). The interval 270 to 295 (GSSSSGSSETTAARRRSPPRRSPHPH) is disordered. Basic residues predominate over residues 282–293 (ARRRSPPRRSPH). Zn(2+) is bound at residue histidine 315. Glutamate 388 acts as the Proton donor/acceptor in catalysis.

It belongs to the peptidase M14 family. It depends on Zn(2+) as a cofactor.

The catalysed reaction is Releases a C-terminal residue, which may be hydrophobic or positively charged.. Carboxypeptidase that possesses the specificities of both mammalian Cpase A and B. Thus shows broad substrate specificity, being able to cleave Cbz-Gly-Leu, Cbz-Gly-Val, Cbz-Gly-Phe, Cbz-Gly-Lys and Bz-Gly-Arg in vitro. The chain is Zinc carboxypeptidase from Saccharothrix mutabilis subsp. capreolus (Streptomyces capreolus).